Here is a 576-residue protein sequence, read N- to C-terminus: Glutamine-dependent NAD(+) synthetase (576 aa).

The CN hydrolase domain occupies 4–246 (LRVTLAQLNP…EEIITVDLDL (243 aa)). The active-site Proton acceptor; for glutaminase activity is the Glu44. The active-site For glutaminase activity is the Lys112. Tyr118 contacts L-glutamine. Catalysis depends on Cys148, which acts as the Nucleophile; for glutaminase activity. Ser176 and Lys182 together coordinate L-glutamine. Residues 292 to 576 (PVREEEMFRA…PITNRFKEPL (285 aa)) form a ligase region. 321–328 (GLSGGMDS) is an ATP binding site. Asn404 contributes to the deamido-NAD(+) binding site. Thr428 is an ATP binding site. 2 residues coordinate deamido-NAD(+): Glu433 and Lys545.

The protein in the C-terminal section; belongs to the NAD synthetase family.

It catalyses the reaction deamido-NAD(+) + L-glutamine + ATP + H2O = L-glutamate + AMP + diphosphate + NAD(+) + H(+). It functions in the pathway cofactor biosynthesis; NAD(+) biosynthesis; NAD(+) from deamido-NAD(+) (L-Gln route): step 1/1. Its function is as follows. Catalyzes the ATP-dependent amidation of deamido-NAD to form NAD. Uses L-glutamine as a nitrogen source. This chain is Glutamine-dependent NAD(+) synthetase (nadE2), found in Thermotoga maritima (strain ATCC 43589 / DSM 3109 / JCM 10099 / NBRC 100826 / MSB8).